The chain runs to 124 residues: Ribonuclease pancreatic (124 aa).

The segment covering 1-15 has biased composition (basic and acidic residues); the sequence is KESPAKKFQRQHMDP. Residues 1-24 are disordered; sequence KESPAKKFQRQHMDPDSSSSNSSN. Substrate contacts are provided by Lys7 and Arg10. The Proton acceptor role is filled by His12. N-linked (GlcNAc...) asparagine glycans are attached at residues Asn21 and Asn34. Disulfide bonds link Cys26/Cys84, Cys40/Cys95, Cys58/Cys110, and Cys65/Cys72. Substrate-binding positions include 41 to 45 and Lys66; that span reads KPVNT. N-linked (GlcNAc...) asparagine glycosylation occurs at Asn76. Substrate is bound at residue Arg85. Residue His119 is the Proton donor of the active site.

The protein belongs to the pancreatic ribonuclease family. As to quaternary structure, monomer. Interacts with and forms tight 1:1 complexes with RNH1. Dimerization of two such complexes may occur. Interaction with RNH1 inhibits this protein. In terms of tissue distribution, pancreas.

Its subcellular location is the secreted. It catalyses the reaction an [RNA] containing cytidine + H2O = an [RNA]-3'-cytidine-3'-phosphate + a 5'-hydroxy-ribonucleotide-3'-[RNA].. The catalysed reaction is an [RNA] containing uridine + H2O = an [RNA]-3'-uridine-3'-phosphate + a 5'-hydroxy-ribonucleotide-3'-[RNA].. Endonuclease that catalyzes the cleavage of RNA on the 3' side of pyrimidine nucleotides. Acts on single-stranded and double-stranded RNA. This is Ribonuclease pancreatic (RNASE1) from Sus scrofa (Pig).